A 247-amino-acid polypeptide reads, in one-letter code: Cobalt transport protein CbiM (247 aa).

Positions 1–21 are cleaved as a signal peptide; sequence MVGWGVLILLMVLWLPRQAYA. 7 helical membrane-spanning segments follow: residues 27-47, 64-84, 96-116, 119-139, 159-179, 181-201, and 202-222; these read GYLP…ALIL, LVLA…LPSV, LGAV…ILLF, LLLA…MAVV, GVAV…TTSL, LALA…KFAS, and IFAV…VIMV.

It belongs to the CbiM family. In terms of assembly, forms an energy-coupling factor (ECF) transporter complex composed of an ATP-binding protein (A component, CbiO), a transmembrane protein (T component, CbiQ) and 2 possible substrate-capture proteins (S components, CbiM and CbiN) of unknown stoichimetry.

It is found in the cell membrane. Its pathway is cofactor biosynthesis; adenosylcobalamin biosynthesis. Part of the energy-coupling factor (ECF) transporter complex CbiMNOQ involved in cobalt import. The protein is Cobalt transport protein CbiM of Kyrpidia tusciae (strain DSM 2912 / NBRC 15312 / T2) (Bacillus tusciae).